We begin with the raw amino-acid sequence, 194 residues long: Peptidyl-tRNA hydrolase (194 aa).

Residue Tyr-17 coordinates tRNA. The active-site Proton acceptor is His-22. TRNA is bound by residues Phe-68, Asn-70, and Asn-116.

Belongs to the PTH family. In terms of assembly, monomer.

It is found in the cytoplasm. It catalyses the reaction an N-acyl-L-alpha-aminoacyl-tRNA + H2O = an N-acyl-L-amino acid + a tRNA + H(+). Its function is as follows. Hydrolyzes ribosome-free peptidyl-tRNAs (with 1 or more amino acids incorporated), which drop off the ribosome during protein synthesis, or as a result of ribosome stalling. Catalyzes the release of premature peptidyl moieties from peptidyl-tRNA molecules trapped in stalled 50S ribosomal subunits, and thus maintains levels of free tRNAs and 50S ribosomes. The protein is Peptidyl-tRNA hydrolase of Shewanella halifaxensis (strain HAW-EB4).